Here is a 276-residue protein sequence, read N- to C-terminus: Hydroxyethylthiazole kinase (276 aa).

2 residues coordinate ATP: Arg126 and Ser172. Residue Gly199 participates in substrate binding.

The protein belongs to the Thz kinase family. Mg(2+) serves as cofactor.

It catalyses the reaction 5-(2-hydroxyethyl)-4-methylthiazole + ATP = 4-methyl-5-(2-phosphooxyethyl)-thiazole + ADP + H(+). Its pathway is cofactor biosynthesis; thiamine diphosphate biosynthesis; 4-methyl-5-(2-phosphoethyl)-thiazole from 5-(2-hydroxyethyl)-4-methylthiazole: step 1/1. Functionally, catalyzes the phosphorylation of the hydroxyl group of 4-methyl-5-beta-hydroxyethylthiazole (THZ). The chain is Hydroxyethylthiazole kinase from Burkholderia pseudomallei (strain 1106a).